The chain runs to 345 residues: Beta-hexosaminidase (345 aa).

Residues Asp-60, Arg-68, Arg-132, and 162–163 (KH) contribute to the substrate site. The active-site Proton donor/acceptor is the His-175. Asp-247 serves as the catalytic Nucleophile.

This sequence belongs to the glycosyl hydrolase 3 family. NagZ subfamily.

It localises to the cytoplasm. It catalyses the reaction Hydrolysis of terminal non-reducing N-acetyl-D-hexosamine residues in N-acetyl-beta-D-hexosaminides.. It functions in the pathway cell wall biogenesis; peptidoglycan recycling. Plays a role in peptidoglycan recycling by cleaving the terminal beta-1,4-linked N-acetylglucosamine (GlcNAc) from peptide-linked peptidoglycan fragments, giving rise to free GlcNAc, anhydro-N-acetylmuramic acid and anhydro-N-acetylmuramic acid-linked peptides. This chain is Beta-hexosaminidase, found in Actinobacillus pleuropneumoniae serotype 3 (strain JL03).